Consider the following 89-residue polypeptide: Protein S100-A6 (89 aa).

EF-hand domains are found at residues 12–47 and 48–83; these read LVAI…IGSK and LQDA…LALI. Ca(2+) is bound by residues threonine 28 and glutamate 33. An N6-acetyllysine modification is found at lysine 40. A Phosphoserine modification is found at serine 46. At lysine 47 the chain carries N6-acetyllysine; alternate. Lysine 47 bears the N6-succinyllysine; alternate mark. The Ca(2+) site is built by aspartate 61, asparagine 63, aspartate 65, glutamate 67, and glutamate 72.

This sequence belongs to the S-100 family. Homodimer; head to tail assembly of 2 subunits. Interacts with CACYBP in a calcium-dependent manner. Interacts with ANXA2 and ANXA11 (via N-terminus). Interacts with SUGT1. Interacts with TP53; has higher affinity for TP53 that is phosphorylated on its N-terminal domain, and lower affinity for TP53 that is phosphorylated on its C-terminal domain. Interacts with tropomyosin. Interacts with FKBP4. Interacts with PPP5C (via TPR repeats); the interaction is calcium-dependent and modulates PPP5C activity. Interacts with TPPP; this interaction inhibits TPPP dimerization.

It is found in the nucleus envelope. Its subcellular location is the cytoplasm. It localises to the cell membrane. Its function is as follows. May function as calcium sensor and modulator, contributing to cellular calcium signaling. May function by interacting with other proteins, such as TPR-containing proteins, and indirectly play a role in many physiological processes such as the reorganization of the actin cytoskeleton and in cell motility. Binds 2 calcium ions. Calcium binding is cooperative. The chain is Protein S100-A6 (S100a6) from Mus musculus (Mouse).